The chain runs to 475 residues: Trifunctional enzyme subunit beta, mitochondrial (475 aa).

The transit peptide at 1 to 34 (MTTILTSTFRNLSTTSKWALRFSVRPLSCSSQVQ) directs the protein to the mitochondrion. An N6-succinyllysine modification is found at lysine 53. An N6-acetyllysine; alternate modification is found at lysine 73. At lysine 73 the chain carries N6-succinyllysine; alternate. The active-site Acyl-thioester intermediate is the cysteine 139. An intramembrane segment occupies 174 to 221 (IRHSRNMRKMMLDLNKAKTLAQRLSLLTKFRLNFLSPELPAVAEFSTN). Residue lysine 189 is modified to N6-acetyllysine; alternate. Lysine 189 is modified (N6-succinyllysine; alternate). N6-succinyllysine is present on residues lysine 191, lysine 273, and lysine 292. Lysine 294 is subject to N6-acetyllysine; alternate. An N6-succinyllysine; alternate modification is found at lysine 294. Lysine 299 is subject to N6-acetyllysine. Lysine 333 is modified (N6-acetyllysine; alternate). N6-succinyllysine; alternate is present on lysine 333. An N6-acetyllysine mark is found at lysine 349 and lysine 362. Catalysis depends on cysteine 459, which acts as the Proton donor/acceptor.

Belongs to the thiolase-like superfamily. Thiolase family. Heterotetramer of 2 alpha/HADHA and 2 beta/HADHB subunits; forms the mitochondrial trifunctional enzyme. Also purified as higher order heterooligomers including a 4 alpha/HADHA and 4 beta/HADHB heterooligomer which physiological significance remains unclear. The mitochondrial trifunctional enzyme interacts with MTLN. Interacts with RSAD2/viperin.

The protein localises to the mitochondrion. It localises to the mitochondrion inner membrane. The protein resides in the mitochondrion outer membrane. Its subcellular location is the endoplasmic reticulum. The catalysed reaction is an acyl-CoA + acetyl-CoA = a 3-oxoacyl-CoA + CoA. It carries out the reaction butanoyl-CoA + acetyl-CoA = 3-oxohexanoyl-CoA + CoA. It catalyses the reaction hexanoyl-CoA + acetyl-CoA = 3-oxooctanoyl-CoA + CoA. The enzyme catalyses octanoyl-CoA + acetyl-CoA = 3-oxodecanoyl-CoA + CoA. The catalysed reaction is decanoyl-CoA + acetyl-CoA = 3-oxododecanoyl-CoA + CoA. It carries out the reaction dodecanoyl-CoA + acetyl-CoA = 3-oxotetradecanoyl-CoA + CoA. It catalyses the reaction tetradecanoyl-CoA + acetyl-CoA = 3-oxohexadecanoyl-CoA + CoA. It functions in the pathway lipid metabolism; fatty acid beta-oxidation. Its function is as follows. Mitochondrial trifunctional enzyme catalyzes the last three of the four reactions of the mitochondrial beta-oxidation pathway. The mitochondrial beta-oxidation pathway is the major energy-producing process in tissues and is performed through four consecutive reactions breaking down fatty acids into acetyl-CoA. Among the enzymes involved in this pathway, the trifunctional enzyme exhibits specificity for long-chain fatty acids. Mitochondrial trifunctional enzyme is a heterotetrameric complex composed of two proteins, the trifunctional enzyme subunit alpha/HADHA carries the 2,3-enoyl-CoA hydratase and the 3-hydroxyacyl-CoA dehydrogenase activities, while the trifunctional enzyme subunit beta/HADHB described here bears the 3-ketoacyl-CoA thiolase activity. The sequence is that of Trifunctional enzyme subunit beta, mitochondrial (Hadhb) from Rattus norvegicus (Rat).